The sequence spans 901 residues: Cyanophycin synthetase (901 aa).

Residues 224–478 (KRILAASGVP…VAGAVMDMLF (255 aa)) enclose the ATP-grasp domain. An ATP-binding site is contributed by 493–499 (GTNGKTT).

It in the C-terminal section; belongs to the MurCDEF family. Homodimer.

It carries out the reaction [L-4-(L-arginin-2-N-yl)aspartate](n) + L-aspartate + ATP = [L-4-(L-arginin-2-N-yl)aspartate](n)-L-aspartate + ADP + phosphate + H(+). The catalysed reaction is [L-4-(L-arginin-2-N-yl)aspartate](n)-L-aspartate + L-arginine + ATP = [L-4-(L-arginin-2-N-yl)aspartate](n+1) + ADP + phosphate + H(+). Its function is as follows. Catalyzes the ATP-dependent polymerization of arginine and aspartate to multi-L-arginyl-poly-L-aspartic acid (cyanophycin; a water-insoluble reserve polymer). The polypeptide is Cyanophycin synthetase (cphA) (Nostoc sp. (strain PCC 7120 / SAG 25.82 / UTEX 2576)).